Consider the following 216-residue polypeptide: uncharacterized protein (216 aa).

Residues 8 to 63 (LKTLMTSVHINASELARRTGIAQPIIHRLSTGQNTNPKLATIKPIARYFMVNISQL) enclose the HTH cro/C1-type domain. Residues 19–38 (ASELARRTGIAQPIIHRLST) constitute a DNA-binding region (H-T-H motif).

This is an uncharacterized protein from Coxiella burnetii (strain RSA 493 / Nine Mile phase I).